We begin with the raw amino-acid sequence, 282 residues long: Large ribosomal subunit protein uL4c (282 aa).

A chloroplast-targeting transit peptide spans 1–43 (MAASLSFFSSSIFLSNPNIQSSKHLLFRSPKQLSVAAIATIRS). Disordered stretches follow at residues 86 to 133 (RNQR…GGVV) and 251 to 282 (RYGD…ESSE). The segment covering 255–282 (ENEWEDEEEDDQEDNDGGEAEESTESSE) has biased composition (acidic residues).

This sequence belongs to the universal ribosomal protein uL4 family. In terms of assembly, part of the 50S ribosomal subunit.

It localises to the plastid. The protein resides in the chloroplast. This protein binds directly and specifically to 23S rRNA. May play a role in plastid transcriptional regulation. The protein is Large ribosomal subunit protein uL4c (RPL4) of Nicotiana tabacum (Common tobacco).